A 328-amino-acid chain; its full sequence is Beta-agarase C (328 aa).

The first 17 residues, 1–17 (MNLTKMAVFAASLFCLA), serve as a signal peptide directing secretion. The propeptide occupies 18–67 (CKNDIDTELEKKSIPESEIQKSEEKLPNEEELTPTDPDEETNKEETVTAN). A compositionally biased stretch (basic and acidic residues) spans 26-45 (LEKKSIPESEIQKSEEKLPN). The tract at residues 26–61 (LEKKSIPESEIQKSEEKLPNEEELTPTDPDEETNKE) is disordered. The segment covering 46-59 (EEELTPTDPDEETN) has biased composition (acidic residues). The GH16 domain maps to 70 to 328 (YDFTGNTPPP…WIHTYQLVEE (259 aa)). Residues tryptophan 110, 119 to 129 (KAENSGVSDGK), 133 to 135 (KAT), glutamate 188, glutamate 193, and arginine 224 each bind substrate. Glutamate 188 serves as the catalytic Nucleophile. The Proton donor role is filled by glutamate 193.

Belongs to the glycosyl hydrolase 16 family.

Its subcellular location is the secreted. It catalyses the reaction Hydrolysis of (1-&gt;4)-beta-D-galactosidic linkages in agarose, giving the tetramer as the predominant product.. Its function is as follows. Cleaves the beta-1,4-linkages between beta-D-galactose and alpha-L-3,6-anhydro-galactose residues in agarose. Cleaves agarose in a random manner with retention of the anomeric-bond configuration, producing beta-anomers that give rise progressively to alpha-anomers when mutarotation takes place. The sequence is that of Beta-agarase C (agaC) from Zobellia galactanivorans (strain DSM 12802 / CCUG 47099 / CIP 106680 / NCIMB 13871 / Dsij).